We begin with the raw amino-acid sequence, 816 residues long: H(+)/Cl(-) exchange transporter 5 (816 aa).

Over 1–124 (MAMWQGAMDN…WALIHSVSDA (124 aa)) the chain is Cytoplasmic. A run of 2 helical transmembrane segments spans residues 125 to 162 (FSGW…ICTG) and 208 to 231 (VNYF…VKVF). The Selectivity filter part_1 signature appears at 237 to 241 (GSGIP). Ser238 serves as a coordination point for chloride. The helical intramembrane region spans 240 to 247 (IPEIKTIL). A run of 2 helical transmembrane segments spans residues 256-275 (LGKW…VSSG) and 281-300 (EGPL…HCFN). The Selectivity filter part_2 motif lies at 279-283 (GKEGP). Intramembrane regions (helical) lie at residues 312–324 (VLSA…VSVA) and 328–336 (PIGGVLFSL). Transmembrane regions (helical) follow at residues 348 to 366 (LWRS…RSIN), 389 to 414 (LVPF…IAWC), 422 to 442 (LGKY…ILAF), 498 to 518 (MWQL…TFGM), and 523 to 542 (GLFI…LGVG). Positions 523-527 (GLFIP) match the Selectivity filter part_3 motif. Phe525 is a chloride binding site. Residues 570–584 (GLYAMVGAAACLGGV) constitute an intramembrane region (helical). Residues 585–587 (TRM) constitute an intramembrane region (note=Loop between two helices). Residues 588-599 (TVSLVVIMFELT) constitute an intramembrane region (helical). Positions 600-604 (GGLEY) form an intramembrane region, note=Loop between two helices. A helical transmembrane segment spans residues 605-622 (IVPLMAAAMTSKWVADAL). Over 623–816 (GREGIYDAHI…NQDPDSILFN (194 aa)) the chain is Cytoplasmic. Residue Tyr628 participates in chloride binding. 2 CBS domains span residues 656-720 (MKPR…ARKK) and 752-812 (ILDL…DPDS). ATP-binding positions include Thr666, 687–689 (YSG), and 794–797 (TKKD).

This sequence belongs to the chloride channel (TC 2.A.49) family. ClC-5/CLCN5 subfamily. In terms of assembly, interacts with NEDD4 and NEDD4L. Post-translationally, ubiquitinated by NEDD4L in the presence of albumin; which promotes endocytosis and proteasomal degradation.

It localises to the golgi apparatus membrane. The protein localises to the endosome membrane. The protein resides in the cell membrane. It catalyses the reaction 2 chloride(in) + H(+)(out) = 2 chloride(out) + H(+)(in). Functionally, proton-coupled chloride transporter. Functions as antiport system and exchanges chloride ions against protons. Important for normal acidification of the endosome lumen. May play an important role in renal tubular function. The CLC channel family contains both chloride channels and proton-coupled anion transporters that exchange chloride or another anion for protons. The absence of conserved gating glutamate residues is typical for family members that function as channels. The protein is H(+)/Cl(-) exchange transporter 5 (CLCN5) of Pongo abelii (Sumatran orangutan).